The chain runs to 524 residues: Chromosomal replication initiator protein DnaA (524 aa).

A domain I, interacts with DnaA modulators region spans residues 1–105 (MSQNSSSLLE…EQEIPETPAQ (105 aa)). Residues 95–183 (PEQEIPETPA…PAHNPNREVS (89 aa)) form a disordered region. Residues 106–182 (QEFKYQPDAP…TPAHNPNREV (77 aa)) are domain II. Positions 148–158 (APEPHPAPIAD) are enriched in pro residues. A domain III, AAA+ region region spans residues 183 to 399 (SLNPKYTFES…GALIRVSAYS (217 aa)). ATP-binding residues include Gly-227, Gly-229, Lys-230, and Thr-231. A domain IV, binds dsDNA region spans residues 400-524 (SLINQPIDKE…TQLIKSRGRN (125 aa)).

It belongs to the DnaA family. As to quaternary structure, oligomerizes as a right-handed, spiral filament on DNA at oriC.

It is found in the cytoplasm. Plays an essential role in the initiation and regulation of chromosomal replication. ATP-DnaA binds to the origin of replication (oriC) to initiate formation of the DNA replication initiation complex once per cell cycle. Binds the DnaA box (a 9 base pair repeat at the origin) and separates the double-stranded (ds)DNA. Forms a right-handed helical filament on oriC DNA; dsDNA binds to the exterior of the filament while single-stranded (ss)DNA is stabiized in the filament's interior. The ATP-DnaA-oriC complex binds and stabilizes one strand of the AT-rich DNA unwinding element (DUE), permitting loading of DNA polymerase. After initiation quickly degrades to an ADP-DnaA complex that is not apt for DNA replication. Binds acidic phospholipids. The polypeptide is Chromosomal replication initiator protein DnaA (Corynebacterium glutamicum (strain R)).